Reading from the N-terminus, the 256-residue chain is Non-structural protein 1 (256 aa).

The protein resides in the host cytoplasm. Its subcellular location is the host perinuclear region. In terms of biological role, plays a role in inhibition of the host innate immune system by counteracting the type I interferon signaling. This Infectious salmon anemia virus (isolate Atlantic salmon/Norway/810/9/99) (ISAV) protein is Non-structural protein 1.